The following is an 821-amino-acid chain: Fibroblast growth factor receptor 2 (821 aa).

The first 21 residues, 1-21 (MVSWGRFICLVLVTMATLSLA), serve as a signal peptide directing secretion. The Extracellular segment spans residues 22–377 (RPSFSLVEDT…EITASPDYLE (356 aa)). The 101-residue stretch at 25–125 (FSLVEDTTLE…ETWIFMVNVT (101 aa)) folds into the Ig-like C2-type 1 domain. The cysteines at positions 62 and 107 are disulfide-linked. 2 N-linked (GlcNAc...) asparagine glycosylation sites follow: N83 and N123. The disordered stretch occupies residues 129 to 151 (SSGDDEDDTDSSEDVVSENRSNQ). The span at 131–144 (GDDEDDTDSSEDVV) shows a compositional bias: acidic residues. Residue N147 is glycosylated (N-linked (GlcNAc...) asparagine). 2 consecutive Ig-like C2-type domains span residues 154–247 (PYWT…YHLD) and 256–358 (PILQ…AWLT). The heparin-binding stretch occupies residues 161–178 (KMEKRLHACPAANTVKFR). C179 and C231 are oxidised to a cystine. N-linked (GlcNAc...) asparagine glycans are attached at residues N228, N241, N265, N297, N318, and N331. A disulfide bridge connects residues C278 and C342. Residues 378-398 (IAIYCIGVFLIACMVVTVIFC) form a helical membrane-spanning segment. Residues 399–821 (RMKTTTKKPD…YPHINGSVKT (423 aa)) are Cytoplasmic-facing. Position 466 is a phosphotyrosine; by autocatalysis (Y466). The Protein kinase domain maps to 481-770 (LTLGKPLGEG…LTLTTNEEYL (290 aa)). Residues 487–495 (LGEGCFGQV), K517, 565–567 (EYA), and N571 each bind ATP. Residues Y586 and Y588 each carry the phosphotyrosine; by autocatalysis modification. D626 functions as the Proton acceptor in the catalytic mechanism. Y656, Y657, and Y769 each carry phosphotyrosine; by autocatalysis. S780 is subject to Phosphoserine.

Belongs to the protein kinase superfamily. Tyr protein kinase family. Fibroblast growth factor receptor subfamily. In terms of assembly, monomer. Homodimer after ligand binding. Interacts predominantly with FGF1 and FGF2, but can also interact with FGF3, FGF4, FGF6, FGF7, FGF8, FGF9, FGF10, FGF17, FGF18 and FGF22 (in vitro). Ligand specificity is determined by tissue-specific expression of isoforms, and differences in the third Ig-like domain are crucial for ligand specificity. Affinity for fibroblast growth factors (FGFs) is increased by heparan sulfate glycosaminoglycans that function as coreceptors. Likewise, KLB increases the affinity for FGF19 and FGF21. Interacts with PLCG1. Interacts with GRB2 and PAK4. Interacts with FLRT2. In terms of processing, autophosphorylated. Binding of FGF family members together with heparan sulfate proteoglycan or heparin promotes receptor dimerization and autophosphorylation on tyrosine residues. Autophosphorylation occurs in trans between the two FGFR molecules present in the dimer. Post-translationally, N-glycosylated in the endoplasmic reticulum. The N-glycan chains undergo further maturation to an Endo H-resistant form in the Golgi apparatus. Ubiquitinated. FGFR2 is rapidly ubiquitinated after autophosphorylation, leading to internalization and degradation. Subject to degradation both in lysosomes and by the proteasome.

Its subcellular location is the cell membrane. It localises to the golgi apparatus. It is found in the cytoplasmic vesicle. It catalyses the reaction L-tyrosyl-[protein] + ATP = O-phospho-L-tyrosyl-[protein] + ADP + H(+). With respect to regulation, present in an inactive conformation in the absence of bound ligand. Ligand binding leads to dimerization and activation by autophosphorylation on tyrosine residues. In terms of biological role, tyrosine-protein kinase that acts as a cell-surface receptor for fibroblast growth factors and plays an essential role in the regulation of cell proliferation, differentiation, migration and apoptosis, and in the regulation of embryonic development. Required for normal embryonic patterning, trophoblast function, limb bud development, lung morphogenesis, osteogenesis and skin development. Plays an essential role in the regulation of osteoblast differentiation, proliferation and apoptosis, and is required for normal skeleton development. Promotes cell proliferation in keratinocytes and immature osteoblasts, but promotes apoptosis in differentiated osteoblasts. Phosphorylates PLCG1, FRS2 and PAK4. Ligand binding leads to the activation of several signaling cascades. Activation of PLCG1 leads to the production of the cellular signaling molecules diacylglycerol and inositol 1,4,5-trisphosphate. Phosphorylation of FRS2 triggers recruitment of GRB2, GAB1, PIK3R1 and SOS1, and mediates activation of RAS, MAPK1/ERK2, MAPK3/ERK1 and the MAP kinase signaling pathway, as well as of the AKT1 signaling pathway. FGFR2 signaling is down-regulated by ubiquitination, internalization and degradation. Mutations that lead to constitutive kinase activation or impair normal FGFR2 maturation, internalization and degradation lead to aberrant signaling. Over-expressed FGFR2 promotes activation of STAT1. The protein is Fibroblast growth factor receptor 2 (Fgfr2) of Mus musculus (Mouse).